The following is a 144-amino-acid chain: Transcriptional regulator SlyA (144 aa).

The HTH marR-type domain occupies 2 to 135; the sequence is ESPLGSDLAR…LLHLIRKLEQ (134 aa). Residues 49-72 constitute a DNA-binding region (H-T-H motif); that stretch reads QIQLAKAIGIEQPSLVRTLDQLEE.

Belongs to the SlyA family. Homodimer.

Functionally, transcription regulator that can specifically activate or repress expression of target genes. This Klebsiella pneumoniae (strain 342) protein is Transcriptional regulator SlyA.